A 374-amino-acid chain; its full sequence is Beta-1,3-N-acetylglucosaminyltransferase lunatic fringe (374 aa).

At 1–8 the chain is on the cytoplasmic side; it reads MLKTYRGK. A helical; Signal-anchor for type II membrane protein membrane pass occupies residues 9–29; sequence VVVSLAGATVTCLGFLLFLSQ. The Lumenal segment spans residues 30–374; that stretch reads HQRIQADGMQ…TPWCPPQVAY (345 aa). Asn-40 carries N-linked (GlcNAc...) asparagine glycosylation. Residues 80-100 are disordered; sequence RSRREADKPSEAPGAATDAPP. Arg-123 is a binding site for substrate. Asn-162 is a glycosylation site (N-linked (GlcNAc...) asparagine). 2 disulfides stabilise this stretch: Cys-163–Cys-174 and Cys-192–Cys-255. Residue Asp-196 coordinates substrate. Asp-197 serves as a coordination point for Mn(2+). Asp-285 is an active-site residue. A Mn(2+)-binding site is contributed by His-309. Residues Cys-359 and Cys-368 are joined by a disulfide bond.

This sequence belongs to the glycosyltransferase 31 family. The cofactor is Mn(2+). Co(2+) is required as a cofactor. In terms of processing, a soluble form may be derived from the membrane form by proteolytic processing. As to expression, in the embryo, expressed along the A-P axis of the neural tube, within the lateral plate mesoderm, in the presomitic mesoderm and the somites, in specific rhombomeres of the hindbrain (even-numbered rhombomeres) and in the otic vesicles.

The protein resides in the golgi apparatus membrane. It carries out the reaction 3-O-(alpha-L-fucosyl)-L-threonyl-[EGF-like domain protein] + UDP-N-acetyl-alpha-D-glucosamine = 3-O-(N-acetyl-beta-D-glucosaminyl-(1-&gt;3)-alpha-L-fucosyl)-L-threonyl-[EGF-like domain protein] + UDP + H(+). It catalyses the reaction 3-O-(alpha-L-fucosyl)-L-seryl-[EGF-like domain protein] + UDP-N-acetyl-alpha-D-glucosamine = 3-O-(N-acetyl-beta-D-glucosaminyl-(1-&gt;3)-alpha-L-fucosyl)-L-seryl-[EGF-like domain protein] + UDP + H(+). Functionally, glycosyltransferase that initiates the elongation of O-linked fucose residues attached to EGF-like repeats in the extracellular domain of Notch molecules. Involved in the correct formation of boundaries in the somites and hindbrain. Required for Delta-Notch-mediated induction of hypochord cells at the lateral borders of the midline precursor domain. The polypeptide is Beta-1,3-N-acetylglucosaminyltransferase lunatic fringe (lfng) (Danio rerio (Zebrafish)).